The chain runs to 199 residues: Imidazole glycerol phosphate synthase subunit HisH (199 aa).

Residues 3-199 enclose the Glutamine amidotransferase type-1 domain; sequence NITIIDTGCA…LKNFVEKVPF (197 aa). Cys-78 serves as the catalytic Nucleophile. Active-site residues include His-178 and Glu-180.

In terms of assembly, heterodimer of HisH and HisF.

Its subcellular location is the cytoplasm. It carries out the reaction 5-[(5-phospho-1-deoxy-D-ribulos-1-ylimino)methylamino]-1-(5-phospho-beta-D-ribosyl)imidazole-4-carboxamide + L-glutamine = D-erythro-1-(imidazol-4-yl)glycerol 3-phosphate + 5-amino-1-(5-phospho-beta-D-ribosyl)imidazole-4-carboxamide + L-glutamate + H(+). The enzyme catalyses L-glutamine + H2O = L-glutamate + NH4(+). The protein operates within amino-acid biosynthesis; L-histidine biosynthesis; L-histidine from 5-phospho-alpha-D-ribose 1-diphosphate: step 5/9. IGPS catalyzes the conversion of PRFAR and glutamine to IGP, AICAR and glutamate. The HisH subunit catalyzes the hydrolysis of glutamine to glutamate and ammonia as part of the synthesis of IGP and AICAR. The resulting ammonia molecule is channeled to the active site of HisF. The sequence is that of Imidazole glycerol phosphate synthase subunit HisH from Haemophilus influenzae (strain 86-028NP).